A 107-amino-acid chain; its full sequence is Integration host factor (107 aa).

The disordered stretch occupies residues 1–20 (MALPPLTPEQRAAALEKAAA). Positions 9–18 (EQRAAALEKA) are enriched in low complexity. Lys54 contacts DNA. Positions 64–71 (LPGVGKVR) match the H2TH motif, binds DNA motif. DNA contacts are provided by Ser82, Arg85, Arg88, Ser92, Asn93, and Gln94. Residues 82–94 (SESRRVRGLGSNQ) form a lid, binds DNA region.

Belongs to the actinobacterial IHF (aIHF) family. As to quaternary structure, monomer.

It is found in the cytoplasm. Its subcellular location is the spore. The protein localises to the nucleoid. Its function is as follows. A nucleoid-associated protein (NAP) that probably plays a role in chromosome compactation. Contributes to development and secondary metabolism, but is dispensable for growth and viability. Binds to the promoter region of a number of genes (including itself); multiple molecules of the protein bind to the DNA simultaneously, deletion alters the expression of about 30 genes (both up- and down-regulation occurs). Plays a role in controlling viability. Binds dsDNA without any obvious sequence specificity, in a concentration and length-dependent manner. Promotes supercoiling in a topoisomerase-dependent manner (counteracts TopA plasmid relaxation). Binds DNA as a monomer, contacting 8 base pairs via the phosphate backbone; each monomer can bind 2 DNA duplexes, allowing a bridging function. Alters DNA topology, constraining negative supercoils, possibly by DNA twist. Longer dsDNA binds more than one sIHF subunit. This chain is Integration host factor, found in Streptomyces coelicolor (strain ATCC BAA-471 / A3(2) / M145).